The chain runs to 137 residues: Acyl carrier protein 4, chloroplastic (137 aa).

The N-terminal 48 residues, 1-48 (MASLSTTSLSFKAPSTTISQVLRKASSSQSVTFGRFTSSTKSLRLQIS), are a transit peptide targeting the chloroplast. The 76-residue stretch at 53-128 (AETVQKVSDI…EAADLIEDLV (76 aa)) folds into the Carrier domain. The residue at position 88 (S88) is an O-(pantetheine 4'-phosphoryl)serine.

The protein belongs to the acyl carrier protein (ACP) family. In terms of processing, 4'-phosphopantetheine is transferred from CoA to a specific serine of apo-ACP by acpS. This modification is essential for activity because fatty acids are bound in thioester linkage to the sulfhydryl of the prosthetic group.

Its subcellular location is the plastid. It localises to the chloroplast. Its function is as follows. Carrier of the growing fatty acid chain in fatty acid biosynthesis that plays a major role in the biosynthesis of fatty acids in leaves. Required for the biosynthesis of chloroplast photosynthetic membrane lipids such as monogalactosyldiacylglycerol, digalactosyldiacylglycerol and phosphatidylglycerol. Is essential for the biosynthesis of the cuticular wax and cutin polymers in leaves, and for the establishment of systemic acquired resistance (SAR). In Arabidopsis thaliana (Mouse-ear cress), this protein is Acyl carrier protein 4, chloroplastic (ACP4).